We begin with the raw amino-acid sequence, 338 residues long: 1-aminocyclopropane-1-carboxylate deaminase (338 aa).

At Lys-51 the chain carries N6-(pyridoxal phosphate)lysine. The active-site Nucleophile is the Ser-78.

The protein belongs to the ACC deaminase/D-cysteine desulfhydrase family. Homotrimer. Pyridoxal 5'-phosphate serves as cofactor.

The enzyme catalyses 1-aminocyclopropane-1-carboxylate + H2O = 2-oxobutanoate + NH4(+). In terms of biological role, catalyzes a cyclopropane ring-opening reaction, the irreversible conversion of 1-aminocyclopropane-1-carboxylate (ACC) to ammonia and alpha-ketobutyrate. Allows growth on ACC as a nitrogen source. The chain is 1-aminocyclopropane-1-carboxylate deaminase from Burkholderia cenocepacia (strain ATCC BAA-245 / DSM 16553 / LMG 16656 / NCTC 13227 / J2315 / CF5610) (Burkholderia cepacia (strain J2315)).